The chain runs to 328 residues: Protein chibby homolog 2 (328 aa).

A disordered region spans residues 180–231; it reads NKGASSVQKDTENTTAAGEGSLGPTCQEEHDAKEESTTPTQNDTKIAPSTED. Over residues 182–195 the composition is skewed to polar residues; the sequence is GASSVQKDTENTTA. The span at 206–215 shows a compositional bias: basic and acidic residues; it reads QEEHDAKEES. The stretch at 259 to 307 forms a coiled coil; that stretch reads RESLHALQDESKFFQEEYKKLKLQLNNVKNTVSDITTQMEMLEKELIAI.

The protein belongs to the chibby family. SPERT subfamily.

This is Protein chibby homolog 2 (CBY2) from Gallus gallus (Chicken).